The chain runs to 284 residues: 2-dehydro-3-deoxyphosphooctonate aldolase (284 aa).

This sequence belongs to the KdsA family.

The protein resides in the cytoplasm. The enzyme catalyses D-arabinose 5-phosphate + phosphoenolpyruvate + H2O = 3-deoxy-alpha-D-manno-2-octulosonate-8-phosphate + phosphate. It functions in the pathway carbohydrate biosynthesis; 3-deoxy-D-manno-octulosonate biosynthesis; 3-deoxy-D-manno-octulosonate from D-ribulose 5-phosphate: step 2/3. It participates in bacterial outer membrane biogenesis; lipopolysaccharide biosynthesis. The chain is 2-dehydro-3-deoxyphosphooctonate aldolase from Citrobacter koseri (strain ATCC BAA-895 / CDC 4225-83 / SGSC4696).